A 491-amino-acid polypeptide reads, in one-letter code: MAAVDVNQPITGHKSAIIRNYNTNPRLIYQTVCGVNGPLVILNDVKFPQFSEIVKITLPDGSKRSGQVLEISKNKAVVQVFEGTSGIDAKNTICEFTGDILRTPVSEDMLGRIFNGSGKPIDKGPPVLAEDFLDINGQPINPWSRIYPEEMIQTGISAIDVMNSIARGQKIPIFSASGLPHNEIAAQIVRQGGLVQLPDRPHEQTNFAIVFAAMGVNMETARFFKQDFEENGSMENVCLFLNLANDPTIERIITPRIALTSAEFLAYQCKKHVLVVLTDMSSYAEALREVSAAREEVPGRRGFPGYMYTDLATIYERAGRVEGRDGSITQIPILTMPNDDITHPIPDLTGYITEGQIYVDRQLHNRLIYPPINVLPSLSRLMKSAIGEGMTREDHSDVSNQLYACYAIGKDVQAMKAVVGEEALSSDDLLYLEFLTKFEKNFITQGHYENRSVFESLDIGWQLLRIFPREMLKRIPESTLEKYYPRGGAKE.

Arginine 380 is an ATP binding site.

Belongs to the ATPase alpha/beta chains family. In terms of assembly, V-ATPase is a heteromultimeric enzyme made up of two complexes: the ATP-hydrolytic V1 complex and the proton translocation V0 complex. The V1 complex consists of three catalytic AB heterodimers that form a heterohexamer, three peripheral stalks each consisting of EG heterodimers, one central rotor including subunits D and F, and the regulatory subunits C and H. The proton translocation complex V0 consists of the proton transport subunit a, a ring of proteolipid subunits c9c'', rotary subunit d, subunits e and f, and the accessory subunits vah-19/Ac45 and vah-20/PRR. In terms of tissue distribution, expressed ubiquitously. Highly expressed in the H-shaped excretory cell, the excretory pore, the intestine, and hypodermal cells. Expressed in the nervous system. Expressed at low levels in muscles.

Non-catalytic subunit of the V1 complex of vacuolar(H+)-ATPase (V-ATPase), a multisubunit enzyme composed of a peripheral complex (V1) that hydrolyzes ATP and a membrane integral complex (V0) that translocates protons. V-ATPase is responsible for acidifying and maintaining the pH of intracellular compartments and in some cell types, is targeted to the plasma membrane, where it is responsible for acidifying the extracellular environment. Essential for the proper assembly and activity of V-ATPase. Required maternally for early embryogenesis and zygotically during morphogenesis. Specifically, involved in the clearance of apoptotic cell corpses in embryos. Also, during embryonic development, the V-ATPase is required to repress fusion of epidermal cells probably by negatively regulating eff-1-mediated cell fusion. In neurons, required for necrotic cell death by promoting intracellular acidification. Required for cell death induced by hypoxia. Required for acidification of synaptic vesicles and the release of neurotransmitters from adult neurons. This chain is V-type proton ATPase subunit B 1, found in Caenorhabditis elegans.